Reading from the N-terminus, the 141-residue chain is Large ribosomal subunit protein uL16c (141 aa).

The span at 1–17 (MLSPKRTKYRKPHRGNR) shows a compositional bias: basic residues. Positions 1–21 (MLSPKRTKYRKPHRGNRKGQA) are disordered.

It belongs to the universal ribosomal protein uL16 family. In terms of assembly, part of the 50S ribosomal subunit.

Its subcellular location is the plastid. The protein resides in the chloroplast. This is Large ribosomal subunit protein uL16c from Ostreococcus tauri.